The sequence spans 467 residues: Pup--protein ligase (467 aa).

Residue glutamate 12 coordinates Mg(2+). Arginine 56 contacts ATP. Position 58 (tyrosine 58) interacts with Mg(2+). Aspartate 60 (proton acceptor) is an active-site residue. Mg(2+) is bound at residue glutamate 66. 2 residues coordinate ATP: threonine 69 and tryptophan 431.

It belongs to the Pup ligase/Pup deamidase family. Pup-conjugating enzyme subfamily.

The catalysed reaction is ATP + [prokaryotic ubiquitin-like protein]-L-glutamate + [protein]-L-lysine = ADP + phosphate + N(6)-([prokaryotic ubiquitin-like protein]-gamma-L-glutamyl)-[protein]-L-lysine.. Its pathway is protein degradation; proteasomal Pup-dependent pathway. The protein operates within protein modification; protein pupylation. Its function is as follows. Catalyzes the covalent attachment of the prokaryotic ubiquitin-like protein modifier Pup to the proteasomal substrate proteins, thereby targeting them for proteasomal degradation. This tagging system is termed pupylation. The ligation reaction involves the side-chain carboxylate of the C-terminal glutamate of Pup and the side-chain amino group of a substrate lysine. The protein is Pup--protein ligase of Corynebacterium jeikeium (strain K411).